We begin with the raw amino-acid sequence, 439 residues long: Histidinol dehydrogenase (439 aa).

The NAD(+) site is built by Tyr132, Gln194, and Asn217. The substrate site is built by Ser244, Gln266, and His269. The Zn(2+) site is built by Gln266 and His269. Active-site proton acceptor residues include Glu335 and His336. Substrate-binding residues include His336, Asp369, Glu423, and His428. Asp369 is a Zn(2+) binding site. Position 428 (His428) interacts with Zn(2+).

Belongs to the histidinol dehydrogenase family. The cofactor is Zn(2+).

The enzyme catalyses L-histidinol + 2 NAD(+) + H2O = L-histidine + 2 NADH + 3 H(+). It functions in the pathway amino-acid biosynthesis; L-histidine biosynthesis; L-histidine from 5-phospho-alpha-D-ribose 1-diphosphate: step 9/9. Catalyzes the sequential NAD-dependent oxidations of L-histidinol to L-histidinaldehyde and then to L-histidine. The polypeptide is Histidinol dehydrogenase (his2) (Schizosaccharomyces pombe (strain 972 / ATCC 24843) (Fission yeast)).